A 55-amino-acid chain; its full sequence is Small ribosomal subunit protein eS31 (55 aa).

Residues cysteine 27, cysteine 30, cysteine 45, and cysteine 48 each coordinate Zn(2+). The C4-type zinc finger occupies 27-48 (CSRCGKGFFMAQHKDRRSCGKC).

It belongs to the eukaryotic ribosomal protein eS31 family. As to quaternary structure, part of the 30S ribosomal subunit. Zn(2+) serves as cofactor.

The chain is Small ribosomal subunit protein eS31 from Cenarchaeum symbiosum (strain A).